A 296-amino-acid chain; its full sequence is Ribosomal protein L11 methyltransferase (296 aa).

S-adenosyl-L-methionine-binding residues include T145, G166, D188, and N230.

Belongs to the methyltransferase superfamily. PrmA family.

It is found in the cytoplasm. It carries out the reaction L-lysyl-[protein] + 3 S-adenosyl-L-methionine = N(6),N(6),N(6)-trimethyl-L-lysyl-[protein] + 3 S-adenosyl-L-homocysteine + 3 H(+). In terms of biological role, methylates ribosomal protein L11. This chain is Ribosomal protein L11 methyltransferase, found in Photorhabdus laumondii subsp. laumondii (strain DSM 15139 / CIP 105565 / TT01) (Photorhabdus luminescens subsp. laumondii).